Consider the following 875-residue polypeptide: Serine/threonine-protein phosphatase 4 regulatory subunit 4 (875 aa).

2 HEAT repeats span residues 215–253 (ILPL…TKNV) and 254–292 (VLPE…RSQT). A coiled-coil region spans residues 686–730 (MFQKKNYEKDLLDQEKEREELLFLEMEQLEKEKHQSDGRLASDKS). Positions 718-739 (KHQSDGRLASDKSFEKKRRDSR) are enriched in basic and acidic residues. Residues 718 to 773 (KHQSDGRLASDKSFEKKRRDSRTSTQSLSKNLPISVPGPSSSTASTSKEIKKSKLT) are disordered. Residues 740–764 (TSTQSLSKNLPISVPGPSSSTASTS) show a composition bias toward polar residues. A Phosphoserine modification is found at Ser777. A Phosphothreonine modification is found at Thr799. Positions 825–859 (RNASSVPASFSPNPVMPSTSRGPGNTADPKSSGSK) are enriched in polar residues. The interval 825–875 (RNASSVPASFSPNPVMPSTSRGPGNTADPKSSGSKDAQPRKATLKSRKSNP) is disordered. Basic residues predominate over residues 866–875 (ATLKSRKSNP).

As to quaternary structure, serine/threonine-protein phosphatase 4 (PP4) occurs in different assemblies of the catalytic and one or more regulatory subunits. Component of the PP4 complex PPP4C-PPP4R4.

The protein localises to the cytoplasm. In terms of biological role, putative regulatory subunit of serine/threonine-protein phosphatase 4. This chain is Serine/threonine-protein phosphatase 4 regulatory subunit 4 (Ppp4r4), found in Mus musculus (Mouse).